Here is a 442-residue protein sequence, read N- to C-terminus: ATP-dependent protease ATPase subunit HslU (442 aa).

ATP-binding positions include Ile-18, 60 to 65 (GVGKTE), Asp-255, Glu-320, and Arg-392.

It belongs to the ClpX chaperone family. HslU subfamily. In terms of assembly, a double ring-shaped homohexamer of HslV is capped on each side by a ring-shaped HslU homohexamer. The assembly of the HslU/HslV complex is dependent on binding of ATP.

The protein localises to the cytoplasm. Functionally, ATPase subunit of a proteasome-like degradation complex; this subunit has chaperone activity. The binding of ATP and its subsequent hydrolysis by HslU are essential for unfolding of protein substrates subsequently hydrolyzed by HslV. HslU recognizes the N-terminal part of its protein substrates and unfolds these before they are guided to HslV for hydrolysis. In Aeromonas salmonicida (strain A449), this protein is ATP-dependent protease ATPase subunit HslU.